The following is a 349-amino-acid chain: ATP phosphoribosyltransferase regulatory subunit (349 aa).

The tract at residues glycine 327–arginine 349 is disordered. A compositionally biased stretch (basic residues) spans arginine 330–arginine 349.

Belongs to the class-II aminoacyl-tRNA synthetase family. HisZ subfamily. As to quaternary structure, heteromultimer composed of HisG and HisZ subunits.

Its subcellular location is the cytoplasm. It functions in the pathway amino-acid biosynthesis; L-histidine biosynthesis; L-histidine from 5-phospho-alpha-D-ribose 1-diphosphate: step 1/9. In terms of biological role, required for the first step of histidine biosynthesis. May allow the feedback regulation of ATP phosphoribosyltransferase activity by histidine. In Anaeromyxobacter dehalogenans (strain 2CP-1 / ATCC BAA-258), this protein is ATP phosphoribosyltransferase regulatory subunit.